The following is a 313-amino-acid chain: Aspartoacylase (313 aa).

Residues His21 and Glu24 each coordinate Zn(2+). 3 residues coordinate N-acetyl-L-aspartate: Arg63, Asn70, and Arg71. Position 116 (His116) interacts with Zn(2+). Positions 164 and 168 each coordinate N-acetyl-L-aspartate. Residue Glu178 is the Proton donor/acceptor of the active site. Tyr288 contributes to the N-acetyl-L-aspartate binding site.

It belongs to the AspA/AstE family. Aspartoacylase subfamily. Homodimer. Zn(2+) serves as cofactor.

The protein resides in the cytoplasm. It localises to the nucleus. The catalysed reaction is an N-acyl-L-aspartate + H2O = a carboxylate + L-aspartate. It catalyses the reaction N-acetyl-L-aspartate + H2O = L-aspartate + acetate. Catalyzes the deacetylation of N-acetylaspartic acid (NAA) to produce acetate and L-aspartate. NAA occurs in high concentration in brain and its hydrolysis NAA plays a significant part in the maintenance of intact white matter. In other tissues it acts as a scavenger of NAA from body fluids. This Pongo abelii (Sumatran orangutan) protein is Aspartoacylase.